We begin with the raw amino-acid sequence, 290 residues long: Nucleotide-binding protein Aave_3603 (290 aa).

13-20 is an ATP binding site; the sequence is GMSGSGKS. A GTP-binding site is contributed by 62–65; sequence DVRS.

This sequence belongs to the RapZ-like family.

Functionally, displays ATPase and GTPase activities. This chain is Nucleotide-binding protein Aave_3603, found in Paracidovorax citrulli (strain AAC00-1) (Acidovorax citrulli).